Here is a 486-residue protein sequence, read N- to C-terminus: Achaete-scute complex protein T8 (486 aa).

Disordered regions lie at residues 1 to 26 (MAAL…GIKT) and 75 to 158 (AAST…LPLP). The segment covering 75 to 86 (AASTTNTTPISS) has biased composition (polar residues). The bHLH domain occupies 159 to 223 (QAVARRNARE…RMAVEYIRSL (65 aa)).

In terms of assembly, efficient DNA binding requires dimerization with another bHLH protein. In terms of tissue distribution, l(1)SC, SC and AC strongly label the presumptive stomatogastric nervous system, while ASE is more prominent in the presumptive procephalic lobe.

Functionally, involved in the determination of the neuronal precursors of optic lobes in the central nervous system. This Drosophila melanogaster (Fruit fly) protein is Achaete-scute complex protein T8 (ase).